Reading from the N-terminus, the 474-residue chain is Bifunctional protein HldE (474 aa).

The segment at 1–317 is ribokinase; the sequence is MKLSMPRFDQ…RRAIQRSEGS (317 aa). Residue 194–197 participates in ATP binding; sequence NLSE. Asp-263 is an active-site residue. A cytidylyltransferase region spans residues 343 to 474; it reads FTNGCFDILH…AIVEKIRNNE (132 aa).

It in the N-terminal section; belongs to the carbohydrate kinase PfkB family. This sequence in the C-terminal section; belongs to the cytidylyltransferase family. In terms of assembly, homodimer.

The enzyme catalyses D-glycero-beta-D-manno-heptose 7-phosphate + ATP = D-glycero-beta-D-manno-heptose 1,7-bisphosphate + ADP + H(+). It carries out the reaction D-glycero-beta-D-manno-heptose 1-phosphate + ATP + H(+) = ADP-D-glycero-beta-D-manno-heptose + diphosphate. The protein operates within nucleotide-sugar biosynthesis; ADP-L-glycero-beta-D-manno-heptose biosynthesis; ADP-L-glycero-beta-D-manno-heptose from D-glycero-beta-D-manno-heptose 7-phosphate: step 1/4. It participates in nucleotide-sugar biosynthesis; ADP-L-glycero-beta-D-manno-heptose biosynthesis; ADP-L-glycero-beta-D-manno-heptose from D-glycero-beta-D-manno-heptose 7-phosphate: step 3/4. Catalyzes the phosphorylation of D-glycero-D-manno-heptose 7-phosphate at the C-1 position to selectively form D-glycero-beta-D-manno-heptose-1,7-bisphosphate. In terms of biological role, catalyzes the ADP transfer from ATP to D-glycero-beta-D-manno-heptose 1-phosphate, yielding ADP-D-glycero-beta-D-manno-heptose. The protein is Bifunctional protein HldE of Pseudomonas fluorescens (strain SBW25).